A 464-amino-acid polypeptide reads, in one-letter code: tRNA modification GTPase MnmE (464 aa).

Arg-25, Glu-87, and Lys-130 together coordinate (6S)-5-formyl-5,6,7,8-tetrahydrofolate. Residues 226–386 (GLSVVLAGQP…LRAELLRIAG (161 aa)) form the TrmE-type G domain. Residue Asn-236 participates in K(+) binding. GTP is bound by residues 236-241 (NVGKSS), 255-261 (TPIAGTT), and 280-283 (DTAG). A Mg(2+)-binding site is contributed by Ser-240. Residues Thr-255, Ile-257, and Thr-260 each coordinate K(+). Residue Thr-261 participates in Mg(2+) binding. Lys-464 contributes to the (6S)-5-formyl-5,6,7,8-tetrahydrofolate binding site.

This sequence belongs to the TRAFAC class TrmE-Era-EngA-EngB-Septin-like GTPase superfamily. TrmE GTPase family. In terms of assembly, homodimer. Heterotetramer of two MnmE and two MnmG subunits. It depends on K(+) as a cofactor.

The protein localises to the cytoplasm. In terms of biological role, exhibits a very high intrinsic GTPase hydrolysis rate. Involved in the addition of a carboxymethylaminomethyl (cmnm) group at the wobble position (U34) of certain tRNAs, forming tRNA-cmnm(5)s(2)U34. This is tRNA modification GTPase MnmE from Burkholderia orbicola (strain AU 1054).